We begin with the raw amino-acid sequence, 436 residues long: Prenyltransferase nscD (436 aa).

This sequence belongs to the tryptophan dimethylallyltransferase family.

It functions in the pathway secondary metabolite biosynthesis. Prenyltransferase; part of the gene cluster that mediates the biosynthesis of neosartoricin B, a prenylated anthracenone that probably exhibits T-cell antiproliferative activity, suggestive of a physiological role as an immunosuppressive agent. The non-reducing polyketide synthase nscA probably synthesizes and cyclizes the decaketide backbone. The hydrolase nscB then mediates the product release through hydrolysis followed by spontaneous decarboxylation. The prenyltransferase nscD catalyzes the addition of the dimethylallyl group to the aromatic C5. The FAD-dependent monooxygenase nscC is then responsible for the stereospecific hydroxylation at C2. Neosartoricin B can be converted into two additional compounds neosartoricins C and D. Neosartoricin C is a spirocyclic compound that is cyclized through the attack of C3 hydroxyl on C14, followed by dehydration. On the other hand, neosartoricin D is a further cyclized compound in which attack of C2 on C14 in neosartoricin C results in the formation of the acetal-containing dioxabicyclo-octanone ring. Both of these compounds are novel and possibly represent related metabolites of the gene cluster. The protein is Prenyltransferase nscD of Trichophyton equinum (strain ATCC MYA-4606 / CBS 127.97) (Horse ringworm fungus).